A 327-amino-acid chain; its full sequence is Aspartate carbamoyltransferase catalytic subunit (327 aa).

Arg-73 and Thr-74 together coordinate carbamoyl phosphate. Residue Lys-101 participates in L-aspartate binding. 3 residues coordinate carbamoyl phosphate: Arg-123, His-153, and Gln-156. 2 residues coordinate L-aspartate: Arg-186 and Arg-241. Residues Gly-282 and Pro-283 each coordinate carbamoyl phosphate.

This sequence belongs to the aspartate/ornithine carbamoyltransferase superfamily. ATCase family. In terms of assembly, heterododecamer (2C3:3R2) of six catalytic PyrB chains organized as two trimers (C3), and six regulatory PyrI chains organized as three dimers (R2).

It catalyses the reaction carbamoyl phosphate + L-aspartate = N-carbamoyl-L-aspartate + phosphate + H(+). The protein operates within pyrimidine metabolism; UMP biosynthesis via de novo pathway; (S)-dihydroorotate from bicarbonate: step 2/3. Functionally, catalyzes the condensation of carbamoyl phosphate and aspartate to form carbamoyl aspartate and inorganic phosphate, the committed step in the de novo pyrimidine nucleotide biosynthesis pathway. The polypeptide is Aspartate carbamoyltransferase catalytic subunit (Acidithiobacillus ferrooxidans (strain ATCC 23270 / DSM 14882 / CIP 104768 / NCIMB 8455) (Ferrobacillus ferrooxidans (strain ATCC 23270))).